Reading from the N-terminus, the 425-residue chain is MSDHQNRGQDFSLEADSELRFEIEQKDAKVLVTLVNGFAELFGTELVKKKKYEFGMGAKVAIFTYQGCVLHVTGKMDVCYISKETPMVQYVNCHAALEQFRTEAEEKDRRGPVAMVVGPTDVGKSTLCRILLNYAVRVGRRPLYADLDVGQGAIAISGNVATILIERPASVEEGFPKTAPLVYHFGHKSPSGNSVLYNAVVSKMAEVTLQSLNGNKRTKSSGIIVNTCGWVKGHGYAHLLHAARAYGACAIFVLDQERLYNELLRDVPSSVHVVLLPKSGGVVERSKELRHECRDQRIKEYFYGNARAPFYPFSFEVKFQELRLYKIGAPPLPDSCMPIGMKAEDNKTKVVAVTPTPALIHHVLALSFAESVDDDVIGTNIAGFCCVTEVDMERQVVMLLSPQPRPLPPNALLLWSELQFMDNHT.

ATP contacts are provided by residues E18, K59, and 121–126 (DVGKST).

This sequence belongs to the Clp1 family. Clp1 subfamily.

The protein localises to the nucleus. Its function is as follows. Required for endonucleolytic cleavage during polyadenylation-dependent pre-mRNA 3'-end formation. In Drosophila pseudoobscura pseudoobscura (Fruit fly), this protein is Protein CLP1 homolog (cbc).